The chain runs to 674 residues: MGQDSNGIEFHQKRHGLLKDQVQLVKRRDSIRYEIVSIQDRLSFEKGFFAVIRACQLLSQKNDGIILVGVAGPSGAGKTVFTEKILNFLPSVAVISMDNYNDSSRIVDGNFDDPRLTDYDTLLKNLEDLKEGKQVEVPIYDFKSSSRVGYRTLDVPPSRIVIIEGIYALSEKLRPLLDLRVSVTGGVHFDLVKRVLRDIQRAGQQPEEIIHQISETVYPMYKAFIEPDLQTAQIKIINKFNPFTGFQSPTYILKSRKEVSVDQIKAVLSDGHTETKEETYDIYLLPPGEDPESCQSYLRMRNKDGKYSLMFEEWVTDTPFVISPRITFEVSVRLLGGLMALGYTIATILKRNSHVFATDKVFVKIDWLEQLNRHYMQVQGKDRQLVQSTAEQLGLEGSFIPRTYIEQIQLEKLINEVMALPDDLKNKLSLDEDLVSSSSPKEALLRASADRVAMRNKNLKRGMSHSYSTQRDKNLSKLAGYSSSDRRYEERNHDSPANEGFMTLLSEQISSLNERMDEFTSRIEELNSKLSCNKNSPTQQSLSIQTEVCNGSAPTSYFISGLDNGCLTNSIMPHSSSSSQLAKDSPLMEEISTISRGQRQVMHQLDNLCNLMRESSAERSRLARTGSSNSGNRGRSSKSSFLSNVESNKLPLVLTVAICSIGIIVIKSYINKRQ.

Residues 248-410 (SPTYILKSRK…PRTYIEQIQL (163 aa)) enclose the CYTH domain. Disordered stretches follow at residues 457–498 (KNLK…SPAN) and 619–640 (RSRL…SKSS). A compositionally biased stretch (basic and acidic residues) spans 484–496 (SDRRYEERNHDSP). Low complexity predominate over residues 623-640 (ARTGSSNSGNRGRSSKSS). A helical transmembrane segment spans residues 650-670 (LPLVLTVAICSIGIIVIKSYI).

Requires Mg(2+) as cofactor. Predominantly expressed in the shoot apices of inflorescences.

It localises to the mitochondrion outer membrane. The catalysed reaction is diphosphate + H2O = 2 phosphate + H(+). Exhibits pyrophosphatase activity with stronger affinity for pyrophosphate (PPi), moderate affinity for ATP and ADP, and weak affinity for tripolyphosphate (PPPi). No activity observed toward uridine substrate. Negative regulator of the salicylic acid (SA)-mediated amplification of defense responses against both virulent and avirulent pathogens, including oomycetes (e.g. H.arabidopsidis) and bacteria (e.g. P.syringae). Represses systemic acquired resistance (SAR). In Arabidopsis thaliana (Mouse-ear cress), this protein is Inorganic pyrophosphatase TTM2.